The primary structure comprises 243 residues: Undecaprenyl-phosphate mannosyltransferase (243 aa).

It belongs to the glycosyltransferase 2 family.

The catalysed reaction is di-trans,octa-cis-undecaprenyl phosphate + GDP-alpha-D-mannose = D-mannosyl di-trans,octa-cis-undecaprenyl phosphate + GDP. In terms of biological role, catalyzes the transfer of mannose from GDP-mannose to D-mannosyl-1-phosphoundecaprenol. The chain is Undecaprenyl-phosphate mannosyltransferase from Micrococcus luteus (strain ATCC 4698 / DSM 20030 / JCM 1464 / CCM 169 / CCUG 5858 / IAM 1056 / NBRC 3333 / NCIMB 9278 / NCTC 2665 / VKM Ac-2230) (Micrococcus lysodeikticus).